A 189-amino-acid polypeptide reads, in one-letter code: MNPVSLIFLAFAMSTDAFAAAIGKGSSLDRPRLSEALRTGIIFGVIEAITPLVGWLLGQAASQFVADWDHWIAFVLLVLLGLHMIHNGLRADHETEQEKPGQHSFWILAVTALATSIDALAVGVGLAFVDVNIFLAAGAIGLATMTMVTLGTMLGRALGAVTGKRAEMVGGVVLILVGATILYEHLSAA.

The next 6 membrane-spanning stretches (helical) occupy residues 3-23 (PVSL…AAIG), 41-61 (IIFG…GQAA), 65-85 (VADW…LHMI), 106-128 (WILA…GLAF), 141-161 (GLAT…LGAV), and 168-188 (MVGG…HLSA).

The protein belongs to the MntP (TC 9.B.29) family.

The protein localises to the cell inner membrane. Functionally, probably functions as a manganese efflux pump. The sequence is that of Putative manganese efflux pump MntP from Pseudomonas aeruginosa (strain LESB58).